The sequence spans 187 residues: Intraflagellar transport protein 22 homolog (187 aa).

Residues 10–17 (GPSECGKT), 65–69 (DCAGD), and 125–128 (HKPG) each bind GTP.

It belongs to the small GTPase superfamily. Rab family.

In Danio rerio (Zebrafish), this protein is Intraflagellar transport protein 22 homolog (ift22).